Consider the following 250-residue polypeptide: Osmotin-like protein OSML15 (250 aa).

Positions 1 to 21 are cleaved as a signal peptide; the sequence is MSHLTTCLVFFLLAFVTYTNA. 8 disulfide bridges follow: C31–C226, C73–C83, C88–C94, C142–C214, C147–C197, C155–C165, C169–C178, and C179–C184.

Belongs to the thaumatin family.

The sequence is that of Osmotin-like protein OSML15 from Solanum commersonii (Commerson's wild potato).